Consider the following 496-residue polypeptide: Cytochrome P450 71B12 (496 aa).

A helical membrane pass occupies residues 2 to 22; the sequence is SLWYIIVAFVFFSSMIIVRII. A heme-binding site is contributed by cysteine 436.

Belongs to the cytochrome P450 family. Heme serves as cofactor.

It is found in the membrane. This chain is Cytochrome P450 71B12 (CYP71B12), found in Arabidopsis thaliana (Mouse-ear cress).